A 519-amino-acid polypeptide reads, in one-letter code: MADDGSASNRRDPIKSSVGNVAGQRRRKQAVTVAKERRELLVRAKRLCRVGTNGDVEDALVENEMMVDEEQPILEAQASKSVEELKSAVQYQGKGAMQKRVTALRELRRLLSKSEFPPVEAALRAGAIPLLVQCLSFGSPDEQLLESAWCLTNIAAGKPEETKALLPALPLLIAHLGEKSSAPVAEQCAWAIGNVAGEGEDLRNVLLSQGALPPLARMIFPDKGSTVRTAAWALSNLIKGPESKAAAQLVKIDGILDAILRHLKKTDEETATEIAWIIVYLSALSDIATSMLLKGGILQLLIDRLATSSSLQLLIPVLRSLGNFVAVDPKAVLTILIREQNTEESIIGVLAKCLRSEHRVLKKEAAWVLSNIAAGSIEHKRMIHSTEVMPLLLRILSTSPFDIRKEVAYVLGNLCVESAEGDRKPRIIQEHLVSIVSGGCLRGFIELVRSPDIEAARLGLQFIELVLRGMPNGEGPKLVEGEDGIDAMERFQFHENEELRVMANSLVDKYFGEDYGIDE.

A disordered region spans residues 1 to 29 (MADDGSASNRRDPIKSSVGNVAGQRRRKQ). 8 ARM repeats span residues 116–156 (FPPV…NIAA), 158–197 (KPEE…NVAG), 200–239 (EDLR…NLIK), 244–283 (KAAA…YLSA), 286–326 (DIAT…NFVA), 335–374 (ILIR…NIAA), 377–416 (IEHK…NLCV), and 429–468 (QEHL…LVLR).

Belongs to the importin alpha family. As to quaternary structure, forms a complex with importin subunit beta-1.

The protein resides in the nucleus envelope. In terms of biological role, binds to conventional NLS motifs and mediates nuclear protein import across the nuclear envelope. Acts as a cellular receptor for the nuclear import of the virD2 protein of Agrobacterium, but is not essential for Agrobacterium-mediated root transformation. The protein is Importin subunit alpha-9 of Arabidopsis thaliana (Mouse-ear cress).